The chain runs to 158 residues: Persistence and stress-resistance toxin PasT (158 aa).

Residues 70–158 are required for resistance of nitrosative stress but not persistence or toxic effects; sequence GISKTFTTRN…VRAKEVYSAR (89 aa).

The protein belongs to the ribosome association toxin RatA family. Associates with 50S ribosomes.

Toxic component of a type II toxin-antitoxin (TA) system. Binds to 50S ribosomal subunits, preventing them from associating with 30S subunits to form 70S ribosomes. In this strain of E.coli low levels of PasT complement operon disruption, however high levels are toxic; their effects are abrogated by high level expression of cognate antitoxin PasI. Plays a role in persistence after antibiotic exposure and survival of nitrosative stress; the toxic and persistence phenotypes are conferred by the same N-terminal region of the protein, while the stress resistance effects can be uncoupled from them in deletion mutants. The sequence is that of Persistence and stress-resistance toxin PasT (pasT) from Escherichia coli O6:H1 (strain CFT073 / ATCC 700928 / UPEC).